The sequence spans 373 residues: Chaperone protein DnaJ (373 aa).

The 65-residue stretch at 4–68 (DYYEILGLTK…VKREQYNQFG (65 aa)) folds into the J domain. The CR-type zinc finger occupies 142 to 224 (GKEIVEPLEK…CKGKTHTKTT (83 aa)). Residues cysteine 155, cysteine 158, cysteine 172, cysteine 175, cysteine 198, cysteine 201, cysteine 212, and cysteine 215 each contribute to the Zn(2+) site. 4 CXXCXGXG motif repeats span residues 155-162 (CNTCNGSG), 172-179 (CTQCSGMG), 198-205 (CSKCNGIG), and 212-219 (CLICKGKT).

Belongs to the DnaJ family. In terms of assembly, homodimer. Requires Zn(2+) as cofactor.

The protein resides in the cytoplasm. In terms of biological role, participates actively in the response to hyperosmotic and heat shock by preventing the aggregation of stress-denatured proteins and by disaggregating proteins, also in an autonomous, DnaK-independent fashion. Unfolded proteins bind initially to DnaJ; upon interaction with the DnaJ-bound protein, DnaK hydrolyzes its bound ATP, resulting in the formation of a stable complex. GrpE releases ADP from DnaK; ATP binding to DnaK triggers the release of the substrate protein, thus completing the reaction cycle. Several rounds of ATP-dependent interactions between DnaJ, DnaK and GrpE are required for fully efficient folding. Also involved, together with DnaK and GrpE, in the DNA replication of plasmids through activation of initiation proteins. In Mycoplasma mobile (strain ATCC 43663 / 163K / NCTC 11711) (Mesomycoplasma mobile), this protein is Chaperone protein DnaJ.